Here is a 176-residue protein sequence, read N- to C-terminus: Inner membrane-spanning protein YciB (176 aa).

The next 6 helical transmembrane spans lie at Phe-3–Phe-23, Thr-24–His-44, Thr-49–His-69, Lys-72–Ala-92, Leu-121–Phe-141, and Phe-149–Leu-169.

Belongs to the YciB family.

It localises to the cell inner membrane. Its function is as follows. Plays a role in cell envelope biogenesis, maintenance of cell envelope integrity and membrane homeostasis. The protein is Inner membrane-spanning protein YciB of Burkholderia cenocepacia (strain ATCC BAA-245 / DSM 16553 / LMG 16656 / NCTC 13227 / J2315 / CF5610) (Burkholderia cepacia (strain J2315)).